Here is a 1106-residue protein sequence, read N- to C-terminus: MRLPGAMPALALKGELLLLSLLLLLEPQISQGLVVTPPGPELVLNVSSTFVLTCSGSAPVVWERMSQEPPQEMAKAQDGTFSSVLTLTNLTGLDTGEYFCTHNDSRGLETDERKRLYIFVPDPTVGFLPNDAEELFIFLTEITEITIPCRVTDPQLVVTLHEKKGDVALPVPYDHQRGFSGIFEDRSYICKTTIGDREVDSDAYYVYRLQVSSINVSVNAVQTVVRQGENITLMCIVIGNEVVNFEWTYPRKESGRLVEPVTDFLLDMPYHIRSILHIPSAELEDSGTYTCNVTESVNDHQDEKAINITVVESGYVRLLGEVGTLQFAELHRSRTLQVVFEAYPPPTVLWFKDNRTLGDSSAGEIALSTRNVSETRYVSELTLVRVKVAEAGHYTMRAFHEDAEVQLSFQLQINVPVRVLELSESHPDSGEQTVRCRGRGMPQPNIIWSACRDLKRCPRELPPTLLGNSSEEESQLETNVTYWEEEQEFEVVSTLRLQHVDRPLSVRCTLRNAVGQDTQEVIVVPHSLPFKVVVISAILALVVLTIISLIILIMLWQKKPRYEIRWKVIESVSSDGHEYIYVDPMQLPYDSTWELPRDQLVLGRTLGSGAFGQVVEATAHGLSHSQATMKVAVKMLKSTARSSEKQALMSELKIMSHLGPHLNVVNLLGACTKGGPIYIITEYCRYGDLVDYLHRNKHTFLQHHSDKRRPPSAELYSNALPVGLPLPSHVSLTGESDGGYMDMSKDESVDYVPMLDMKGDVKYADIESSNYMAPYDNYVPSAPERTCRATLINESPVLSYMDLVGFSYQVANGMEFLASKNCVHRDLAARNVLICEGKLVKICDFGLARDIMRDSNYISKGSTFLPLKWMAPESIFNSLYTTLSDVWSFGILLWEIFTLGGTPYPELPMNEQFYNAIKRGYRMAQPAHASDEIYEIMQKCWEEKFEIRPPFSQLVLLLERLLGEGYKKKYQQVDEEFLRSDHPAILRSQARLPGFHGLRSPLDTSSVLYTAVQPNEGDNDYIIPLPDPKPEVADEGPLEGSPSLASSTLNEVNTSSTISCDSPLEPQDEPEPEPQLELQVEPEPELEQLPDSGCPAPRAEAEDSFL.

The N-terminal stretch at 1–32 (MRLPGAMPALALKGELLLLSLLLLLEPQISQG) is a signal peptide. Ig-like C2-type domains are found at residues 33-120 (LVVT…YIFV), 129-210 (PNDA…YRLQ), 214-309 (INVS…INIT), 331-403 (HRSR…HEDA), and 416-524 (PVRV…VIVV). Residues 33–532 (LVVTPPGPEL…VVPHSLPFKV (500 aa)) lie on the Extracellular side of the membrane. Residues asparagine 45, asparagine 89, and asparagine 103 are each glycosylated (N-linked (GlcNAc...) asparagine). Cysteine 54 and cysteine 100 are joined by a disulfide. A disulfide bridge connects residues cysteine 149 and cysteine 190. N-linked (GlcNAc...) asparagine glycosylation is found at asparagine 215 and asparagine 230. Cysteine 235 and cysteine 291 form a disulfide bridge. N-linked (GlcNAc...) asparagine glycosylation is found at asparagine 292, asparagine 307, asparagine 354, asparagine 371, asparagine 468, and asparagine 479. A disulfide bridge connects residues cysteine 436 and cysteine 508. A helical membrane pass occupies residues 533–553 (VVISAILALVVLTIISLIILI). Residues 554–1106 (MLWQKKPRYE…PRAEAEDSFL (553 aa)) lie on the Cytoplasmic side of the membrane. Tyrosine 562, tyrosine 579, and tyrosine 581 each carry phosphotyrosine; by autocatalysis. The region spanning 600 to 962 (LVLGRTLGSG…QLVLLLERLL (363 aa)) is the Protein kinase domain. ATP-binding positions include 606-614 (LGSGAFGQV) and lysine 634. At tyrosine 686 the chain carries Phosphotyrosine; by ABL1 and ABL2. Tyrosine 716, tyrosine 740, tyrosine 751, tyrosine 763, tyrosine 771, tyrosine 775, and tyrosine 778 each carry phosphotyrosine; by autocatalysis. The active-site Proton acceptor is aspartate 826. Tyrosine 857 carries the post-translational modification Phosphotyrosine; by autocatalysis. 2 positions are modified to phosphotyrosine; by ABL1 and ABL2: tyrosine 934 and tyrosine 970. Phosphotyrosine; by autocatalysis occurs at positions 1009 and 1021. The disordered stretch occupies residues 1019-1106 (NDYIIPLPDP…PRAEAEDSFL (88 aa)). The segment covering 1043 to 1060 (SLASSTLNEVNTSSTISC) has biased composition (polar residues). Residues 1066–1088 (PQDEPEPEPQLELQVEPEPELEQ) show a composition bias toward acidic residues.

Belongs to the protein kinase superfamily. Tyr protein kinase family. CSF-1/PDGF receptor subfamily. Interacts with homodimeric PDGFB and PDGFD, and with heterodimers formed by PDGFA and PDGFB. May also interact with homodimeric PDGFC. Monomer in the absence of bound ligand. Interaction with homodimeric PDGFB, heterodimers formed by PDGFA and PDGFB or homodimeric PDGFD, leads to receptor dimerization, where both PDGFRA homodimers and heterodimers with PDGFRB are observed. Interacts with SH2B2/APS. Interacts directly (tyrosine phosphorylated) with SHB. Interacts (tyrosine phosphorylated) with PIK3R1 and RASA1. Interacts (tyrosine phosphorylated) with CBL. Interacts (tyrosine phosphorylated) with SRC and SRC family kinases. Interacts (tyrosine phosphorylated) with PIK3C2B, maybe indirectly. Interacts (tyrosine phosphorylated) with SHC1, GRB7, GRB10 and NCK1. Interaction with GRB2 is mediated by SHC1. Interacts (via C-terminus) with NHERF1. In terms of processing, autophosphorylated on tyrosine residues upon ligand binding. Autophosphorylation occurs in trans, i.e. one subunit of the dimeric receptor phosphorylates tyrosine residues on the other subunit. Phosphorylation at Tyr-579, and to a lesser degree, at Tyr-581, is important for interaction with SRC family kinases. Phosphorylation at Tyr-740 and Tyr-751 is important for interaction with PIK3R1. Phosphorylation at Tyr-751 is important for interaction with NCK1. Phosphorylation at Tyr-771 and Tyr-857 is important for interaction with RASA1/GAP. Phosphorylation at Tyr-857 is important for efficient phosphorylation of PLCG1 and PTPN11, resulting in increased phosphorylation of AKT1, MAPK1/ERK2 and/or MAPK3/ERK1, PDCD6IP/ALIX and STAM, and in increased cell proliferation. Phosphorylation at Tyr-1009 is important for interaction with PTPN11. Phosphorylation at Tyr-1009 and Tyr-1021 is important for interaction with PLCG1. Phosphorylation at Tyr-1021 is important for interaction with CBL; PLCG1 and CBL compete for the same binding site. Dephosphorylated by PTPRJ at Tyr-751, Tyr-857, Tyr-1009 and Tyr-1021. Dephosphorylated by PTPN2 at Tyr-579 and Tyr-1021. Post-translationally, N-glycosylated. Ubiquitinated. After autophosphorylation, the receptor is polyubiquitinated, leading to its degradation.

It is found in the cell membrane. Its subcellular location is the cytoplasmic vesicle. The protein localises to the lysosome lumen. It catalyses the reaction L-tyrosyl-[protein] + ATP = O-phospho-L-tyrosyl-[protein] + ADP + H(+). Present in an inactive conformation in the absence of bound ligand. Binding of PDGFB and/or PDGFD leads to dimerization and activation by autophosphorylation on tyrosine residues. Inhibited by imatinib. Its function is as follows. Tyrosine-protein kinase that acts as a cell-surface receptor for homodimeric PDGFB and PDGFD and for heterodimers formed by PDGFA and PDGFB, and plays an essential role in the regulation of embryonic development, cell proliferation, survival, differentiation, chemotaxis and migration. Plays an essential role in blood vessel development by promoting proliferation, migration and recruitment of pericytes and smooth muscle cells to endothelial cells. Plays a role in the migration of vascular smooth muscle cells and the formation of neointima at vascular injury sites. Required for normal development of the cardiovascular system. Required for normal recruitment of pericytes (mesangial cells) in the kidney glomerulus, and for normal formation of a branched network of capillaries in kidney glomeruli. Promotes rearrangement of the actin cytoskeleton and the formation of membrane ruffles. Binding of its cognate ligands - homodimeric PDGFB, heterodimers formed by PDGFA and PDGFB or homodimeric PDGFD -leads to the activation of several signaling cascades; the response depends on the nature of the bound ligand and is modulated by the formation of heterodimers between PDGFRA and PDGFRB. Phosphorylates PLCG1, PIK3R1, PTPN11, RASA1/GAP, CBL, SHC1 and NCK1. Activation of PLCG1 leads to the production of the cellular signaling molecules diacylglycerol and inositol 1,4,5-trisphosphate, mobilization of cytosolic Ca(2+) and the activation of protein kinase C. Phosphorylation of PIK3R1, the regulatory subunit of phosphatidylinositol 3-kinase, leads to the activation of the AKT1 signaling pathway. Phosphorylation of SHC1, or of the C-terminus of PTPN11, creates a binding site for GRB2, resulting in the activation of HRAS, RAF1 and down-stream MAP kinases, including MAPK1/ERK2 and/or MAPK3/ERK1. Promotes phosphorylation and activation of SRC family kinases. Promotes phosphorylation of PDCD6IP/ALIX and STAM. Receptor signaling is down-regulated by protein phosphatases that dephosphorylate the receptor and its down-stream effectors, and by rapid internalization of the activated receptor. This chain is Platelet-derived growth factor receptor beta (PDGFRB), found in Homo sapiens (Human).